The sequence spans 370 residues: Cyclin-A3-4 (370 aa).

The protein belongs to the cyclin family. Cyclin AB subfamily. Interacts with FZR2/CCS52A1, FZR1/CCS52A2 and FZR3/CCS52B.

This Arabidopsis thaliana (Mouse-ear cress) protein is Cyclin-A3-4 (CYCA3-4).